We begin with the raw amino-acid sequence, 518 residues long: Protein translocase subunit SecD (518 aa).

6 consecutive transmembrane segments (helical) span residues isoleucine 9–glutamine 29, glycine 356–glycine 376, valine 377–leucine 397, leucine 406–isoleucine 426, leucine 463–alanine 483, and isoleucine 486–tryptophan 506.

The protein belongs to the SecD/SecF family. SecD subfamily. In terms of assembly, forms a complex with SecF. Part of the essential Sec protein translocation apparatus which comprises SecA, SecYEG and auxiliary proteins SecDF-YajC and YidC.

It localises to the cell inner membrane. Its function is as follows. Part of the Sec protein translocase complex. Interacts with the SecYEG preprotein conducting channel. SecDF uses the proton motive force (PMF) to complete protein translocation after the ATP-dependent function of SecA. The sequence is that of Protein translocase subunit SecD from Rickettsia prowazekii (strain Madrid E).